The following is a 155-amino-acid chain: Protein Smg homolog (155 aa).

This sequence belongs to the Smg family.

The sequence is that of Protein Smg homolog from Azoarcus sp. (strain BH72).